The chain runs to 344 residues: Arginine N-succinyltransferase (344 aa).

Position 125 (Leu125) interacts with succinyl-CoA. Residue His229 is the Proton donor of the active site.

The protein belongs to the arginine N-succinyltransferase family.

It catalyses the reaction succinyl-CoA + L-arginine = N(2)-succinyl-L-arginine + CoA + H(+). The protein operates within amino-acid degradation; L-arginine degradation via AST pathway; L-glutamate and succinate from L-arginine: step 1/5. In terms of biological role, catalyzes the transfer of succinyl-CoA to arginine to produce N(2)-succinylarginine. The protein is Arginine N-succinyltransferase of Shigella sonnei (strain Ss046).